The chain runs to 234 residues: bZIP transcription factor 1 (234 aa).

The disordered stretch occupies residues 67 to 134; it reads RAQSDGSNAL…DKQRNAQQQL (68 aa). Residues 70-86 are compositionally biased toward polar residues; it reads SDGSNALLSSIGPSGTT. A compositionally biased stretch (basic and acidic residues) spans 88 to 128; that stretch reads RPRDEMDCFTDTHKHKRGDGNKSRRREQCRANQARYRDKQR. A bZIP domain is found at 106-169; that stretch reads DGNKSRRREQ…RTNQSPWNTV (64 aa). The basic motif stretch occupies residues 109–128; sequence KSRRREQCRANQARYRDKQR. The segment at 134 to 155 is leucine-zipper; it reads LERSVEQLQSELSTLKHRNLDL.

This sequence belongs to the bZIP family. As to quaternary structure, interacts with PKZ1.

It is found in the nucleus. In terms of biological role, required for normal zoospore movement, formation of appressoria by germinated zoospore cysts and plant infection. In Phytophthora infestans (Potato late blight agent), this protein is bZIP transcription factor 1.